Consider the following 66-residue polypeptide: MPKQKTHRASAKRFKRTGSGGLKRFRAFTSHRFHGKTKKQRRHLRKASMVHPGDFKRIKSMVSQMR.

Over residues 1–16 the composition is skewed to basic residues; it reads MPKQKTHRASAKRFKR. Residues 1–20 are disordered; it reads MPKQKTHRASAKRFKRTGSG.

The protein belongs to the bacterial ribosomal protein bL35 family.

This Streptococcus thermophilus (strain CNRZ 1066) protein is Large ribosomal subunit protein bL35.